Reading from the N-terminus, the 363-residue chain is Biotin synthase (363 aa).

The region spanning 40–268 (NVVQVSTLLS…ETQVRLSAGR (229 aa)) is the Radical SAM core domain. The [4Fe-4S] cluster site is built by Cys-55, Cys-59, and Cys-62. Positions 99, 131, 191, and 263 each coordinate [2Fe-2S] cluster.

Belongs to the radical SAM superfamily. Biotin synthase family. As to quaternary structure, homodimer. It depends on [4Fe-4S] cluster as a cofactor. [2Fe-2S] cluster is required as a cofactor.

The catalysed reaction is (4R,5S)-dethiobiotin + (sulfur carrier)-SH + 2 reduced [2Fe-2S]-[ferredoxin] + 2 S-adenosyl-L-methionine = (sulfur carrier)-H + biotin + 2 5'-deoxyadenosine + 2 L-methionine + 2 oxidized [2Fe-2S]-[ferredoxin]. Its pathway is cofactor biosynthesis; biotin biosynthesis; biotin from 7,8-diaminononanoate: step 2/2. Functionally, catalyzes the conversion of dethiobiotin (DTB) to biotin by the insertion of a sulfur atom into dethiobiotin via a radical-based mechanism. The polypeptide is Biotin synthase (Flavobacterium johnsoniae (strain ATCC 17061 / DSM 2064 / JCM 8514 / BCRC 14874 / CCUG 350202 / NBRC 14942 / NCIMB 11054 / UW101) (Cytophaga johnsonae)).